The following is a 144-amino-acid chain: 3-hydroxyacyl-[acyl-carrier-protein] dehydratase FabZ (144 aa).

Residue histidine 47 is part of the active site.

Belongs to the thioester dehydratase family. FabZ subfamily.

It localises to the cytoplasm. The enzyme catalyses a (3R)-hydroxyacyl-[ACP] = a (2E)-enoyl-[ACP] + H2O. In terms of biological role, involved in unsaturated fatty acids biosynthesis. Catalyzes the dehydration of short chain beta-hydroxyacyl-ACPs and long chain saturated and unsaturated beta-hydroxyacyl-ACPs. This chain is 3-hydroxyacyl-[acyl-carrier-protein] dehydratase FabZ, found in Alcanivorax borkumensis (strain ATCC 700651 / DSM 11573 / NCIMB 13689 / SK2).